Reading from the N-terminus, the 201-residue chain is Snake venom metalloproteinase trimerelysin-2 (201 aa).

Position 1 is a pyrrolidone carboxylic acid (glutamine 1). The 196-residue stretch at 6 to 201 (RYIELAIVVD…YNPQCILNAP (196 aa)) folds into the Peptidase M12B domain. An N-linked (GlcNAc...) asparagine glycan is attached at asparagine 72. 3 disulfide bridges follow: cysteine 117–cysteine 196, cysteine 158–cysteine 180, and cysteine 160–cysteine 163. Position 142 (histidine 142) interacts with Zn(2+). The active site involves glutamate 143. Zn(2+)-binding residues include histidine 146 and histidine 152.

It belongs to the venom metalloproteinase (M12B) family. P-I subfamily. As to quaternary structure, monomer. It depends on Zn(2+) as a cofactor. In terms of tissue distribution, expressed by the venom gland.

The protein localises to the secreted. The catalysed reaction is Cleavage of 3-Asn-|-Gln-4, 10-His-|-Leu-11 and 14-Ala-|-Leu-15 in the insulin B chain, and the bond Z-Gly-Pro-|-Leu-Gly-Pro in a small molecule substrate of microbial collagenase.. Functionally, major venom non-hemorrhagic metalloproteinase. This chain is Snake venom metalloproteinase trimerelysin-2, found in Protobothrops flavoviridis (Habu).